The chain runs to 346 residues: Elongation factor Ts (346 aa).

The interval 80-83 (TDFV) is involved in Mg(2+) ion dislocation from EF-Tu.

Belongs to the EF-Ts family.

It is found in the cytoplasm. Associates with the EF-Tu.GDP complex and induces the exchange of GDP to GTP. It remains bound to the aminoacyl-tRNA.EF-Tu.GTP complex up to the GTP hydrolysis stage on the ribosome. The polypeptide is Elongation factor Ts (tsf) (Streptococcus pneumoniae (strain ATCC BAA-255 / R6)).